A 282-amino-acid polypeptide reads, in one-letter code: Pyridoxal 5'-phosphate synthase subunit PdxS (282 aa).

Position 14 (Asp-14) interacts with D-ribose 5-phosphate. Lys-71 serves as the catalytic Schiff-base intermediate with D-ribose 5-phosphate. Residue Gly-143 participates in D-ribose 5-phosphate binding. Arg-155 is a D-glyceraldehyde 3-phosphate binding site. D-ribose 5-phosphate-binding positions include Gly-204 and 225–226; that span reads GS.

It belongs to the PdxS/SNZ family. In terms of assembly, in the presence of PdxT, forms a dodecamer of heterodimers.

It carries out the reaction aldehydo-D-ribose 5-phosphate + D-glyceraldehyde 3-phosphate + L-glutamine = pyridoxal 5'-phosphate + L-glutamate + phosphate + 3 H2O + H(+). It functions in the pathway cofactor biosynthesis; pyridoxal 5'-phosphate biosynthesis. Functionally, catalyzes the formation of pyridoxal 5'-phosphate from ribose 5-phosphate (RBP), glyceraldehyde 3-phosphate (G3P) and ammonia. The ammonia is provided by the PdxT subunit. Can also use ribulose 5-phosphate and dihydroxyacetone phosphate as substrates, resulting from enzyme-catalyzed isomerization of RBP and G3P, respectively. This is Pyridoxal 5'-phosphate synthase subunit PdxS from Treponema denticola (strain ATCC 35405 / DSM 14222 / CIP 103919 / JCM 8153 / KCTC 15104).